We begin with the raw amino-acid sequence, 213 residues long: Glycerol-3-phosphate acyltransferase (213 aa).

6 helical membrane-spanning segments follow: residues 3–23, 48–68, 71–91, 119–139, 144–164, and 165–185; these read IIILLLIASYLLGAIPFGLWI, ILGVKAGIAVFIFDLLKGTLA, LPLIFHINGVSPLIFGLLAVI, PFFLLYLLVIFILVLWLFSMI, VVAAIFALLGILIFPSFGFIL, and TSYDLLFSIIIFALAIIIIFR.

It belongs to the PlsY family. As to quaternary structure, probably interacts with PlsX.

It is found in the cell membrane. It catalyses the reaction an acyl phosphate + sn-glycerol 3-phosphate = a 1-acyl-sn-glycero-3-phosphate + phosphate. The protein operates within lipid metabolism; phospholipid metabolism. In terms of biological role, catalyzes the transfer of an acyl group from acyl-phosphate (acyl-PO(4)) to glycerol-3-phosphate (G3P) to form lysophosphatidic acid (LPA). This enzyme utilizes acyl-phosphate as fatty acyl donor, but not acyl-CoA or acyl-ACP. This Lactococcus lactis subsp. cremoris (strain SK11) protein is Glycerol-3-phosphate acyltransferase.